A 267-amino-acid chain; its full sequence is Putative ABC transporter permease protein MJ0413 (267 aa).

7 helical membrane passes run 18–38 (VLKI…AIYI), 48–68 (EAVI…GSLI), 78–98 (VISG…LMGY), 115–135 (PIPP…GEMS), 136–156 (MIFI…ISGV), 188–208 (PSIL…VVAA), and 228–248 (LSRM…GLVL). The ABC transmembrane type-1 domain maps to 71-252 (TIISIKRVIS…LIGLVLDRGL (182 aa)).

Belongs to the binding-protein-dependent transport system permease family. CysTW subfamily.

The protein resides in the cell membrane. In terms of biological role, probably part of a binding-protein-dependent transport system. Probably responsible for the translocation of the substrate across the membrane. The protein is Putative ABC transporter permease protein MJ0413 of Methanocaldococcus jannaschii (strain ATCC 43067 / DSM 2661 / JAL-1 / JCM 10045 / NBRC 100440) (Methanococcus jannaschii).